Consider the following 234-residue polypeptide: uncharacterized protein (234 aa).

The tract at residues 199-234 is disordered; that stretch reads DNQNEPLENYSDDNNFSNFDETEHVDDSEMNDDNFI.

This is an uncharacterized protein from Buchnera aphidicola subsp. Schizaphis graminum (strain Sg).